Here is a 209-residue protein sequence, read N- to C-terminus: Imidazole glycerol phosphate synthase subunit HisH (209 aa).

Residues 1-205 form the Glutamine amidotransferase type-1 domain; the sequence is MIAIIDYGMG…QGVVEAWKSS (205 aa). The active-site Nucleophile is the C79. Active-site residues include H180 and E182.

Heterodimer of HisH and HisF.

It is found in the cytoplasm. The enzyme catalyses 5-[(5-phospho-1-deoxy-D-ribulos-1-ylimino)methylamino]-1-(5-phospho-beta-D-ribosyl)imidazole-4-carboxamide + L-glutamine = D-erythro-1-(imidazol-4-yl)glycerol 3-phosphate + 5-amino-1-(5-phospho-beta-D-ribosyl)imidazole-4-carboxamide + L-glutamate + H(+). It carries out the reaction L-glutamine + H2O = L-glutamate + NH4(+). The protein operates within amino-acid biosynthesis; L-histidine biosynthesis; L-histidine from 5-phospho-alpha-D-ribose 1-diphosphate: step 5/9. IGPS catalyzes the conversion of PRFAR and glutamine to IGP, AICAR and glutamate. The HisH subunit catalyzes the hydrolysis of glutamine to glutamate and ammonia as part of the synthesis of IGP and AICAR. The resulting ammonia molecule is channeled to the active site of HisF. This is Imidazole glycerol phosphate synthase subunit HisH from Bacillus cereus (strain ATCC 14579 / DSM 31 / CCUG 7414 / JCM 2152 / NBRC 15305 / NCIMB 9373 / NCTC 2599 / NRRL B-3711).